The primary structure comprises 290 residues: Nucleoid occlusion protein (290 aa).

The H-T-H motif DNA-binding region spans 153 to 172 (EALAQRLGKGQSTIANKLRL).

It belongs to the ParB family.

It localises to the cytoplasm. Its subcellular location is the nucleoid. Its function is as follows. Effects nucleoid occlusion by binding relatively nonspecifically to DNA and preventing the assembly of the division machinery in the vicinity of the nucleoid, especially under conditions that disturb the cell cycle. It helps to coordinate cell division and chromosome segregation by preventing the formation of the Z ring through the nucleoid, which would cause chromosome breakage. The polypeptide is Nucleoid occlusion protein (Bacillus cereus (strain AH187)).